Consider the following 897-residue polypeptide: Zinc finger protein zas1 (897 aa).

2 consecutive C2H2-type zinc fingers follow at residues 26 to 50 (FYCTYPDCPKSFTRKEHLRRHERTH) and 56 to 79 (FSCSFCNRAFARSDVLNRHVQQMH). The C2H2-type 3; atypical zinc finger occupies 93–119 (ASCFLGFCVLAHDYVNLINARHFMIEH).

The protein localises to the nucleus. This chain is Zinc finger protein zas1 (zas1), found in Schizosaccharomyces pombe (strain 972 / ATCC 24843) (Fission yeast).